A 77-amino-acid polypeptide reads, in one-letter code: Conotoxin ArMKLT2-0122 (77 aa).

Residues 1–22 (MKLTCVLIVAVLFLTACQLIAA) form the signal peptide. A propeptide spanning residues 23-44 (DDSRDLKRFSRRKMRDGMLNTK) is cleaved from the precursor. 3 disulfides stabilise this stretch: C50-C65, C57-C68, and C64-C73.

It belongs to the conotoxin O1 superfamily. As to expression, expressed by the venom duct.

The protein resides in the secreted. The polypeptide is Conotoxin ArMKLT2-0122 (Conus arenatus (Sand-dusted cone)).